A 73-amino-acid polypeptide reads, in one-letter code: Cell division protein ZapB (73 aa).

Positions Leu3–Leu69 form a coiled coil. The segment at Glu30–Gln50 is disordered. Low complexity predominate over residues Asn41 to Gln50.

This sequence belongs to the ZapB family. As to quaternary structure, homodimer. The ends of the coiled-coil dimer bind to each other, forming polymers. Interacts with FtsZ.

The protein resides in the cytoplasm. Non-essential, abundant cell division factor that is required for proper Z-ring formation. It is recruited early to the divisome by direct interaction with FtsZ, stimulating Z-ring assembly and thereby promoting cell division earlier in the cell cycle. Its recruitment to the Z-ring requires functional FtsA or ZipA. The sequence is that of Cell division protein ZapB from Shewanella putrefaciens (strain CN-32 / ATCC BAA-453).